Reading from the N-terminus, the 384-residue chain is Probable E3 ubiquitin-protein ligase rnf113 (384 aa).

Positions 1 to 11 are enriched in basic residues; sequence MDLFRKPKKRN. The disordered stretch occupies residues 1 to 96; sequence MDLFRKPKKR…GPSGPRDQGA (96 aa). Polar residues predominate over residues 42–52; the sequence is PMVQSTKQLDA. The segment covering 60-71 has biased composition (acidic residues); it reads SSDDSDDSDDNQ. A C3H1-type zinc finger spans residues 175 to 203; that stretch reads DFAPDICKDYKETGFCTFGDSCKFVHDRS. An RING-type zinc finger spans residues 241-279; it reads CFICGNPFVDPIVTKCKHYFCTGCALKSFQKSSKCPICQ. Positions 299–384 are disordered; sequence KKQQQKQEAE…ESDDDDAEKD (86 aa). Composition is skewed to basic and acidic residues over residues 303 to 312 and 320 to 334; these read QKQEAEKQEE and EKPHECDDHHHHDHE. A compositionally biased stretch (acidic residues) spans 351–384; sequence EKSDEEQEIMMEDVEGLEGGENDSESDDDDAEKD.

It carries out the reaction S-ubiquitinyl-[E2 ubiquitin-conjugating enzyme]-L-cysteine + [acceptor protein]-L-lysine = [E2 ubiquitin-conjugating enzyme]-L-cysteine + N(6)-ubiquitinyl-[acceptor protein]-L-lysine.. It participates in protein modification; protein ubiquitination. May function as E3 ubiquitin-protein ligase that catalyzes the transfer of ubiquitin onto target proteins. May play a role in DNA repair via its role in the synthesis of 'Lys-63'-linked polyubiquitin chains that recruit proteins involved in repair to sites of DNA damage by alkylating agents. In Caenorhabditis elegans, this protein is Probable E3 ubiquitin-protein ligase rnf113 (rnf-113).